Consider the following 58-residue polypeptide: Large ribosomal subunit protein bL32 (58 aa).

Residues 1 to 23 (MAVPARHTSSAKKNRRRTHYKLT) form a disordered region. Residues 9–20 (SSAKKNRRRTHY) are compositionally biased toward basic residues.

The protein belongs to the bacterial ribosomal protein bL32 family.

This is Large ribosomal subunit protein bL32 (rpmF) from Lactococcus lactis subsp. cremoris (Streptococcus cremoris).